An 876-amino-acid polypeptide reads, in one-letter code: Valine--tRNA ligase (876 aa).

Residues 43-53 carry the 'HIGH' region motif; it reads PNVTGVLHMGH. The 'KMSKS' region signature appears at 534–538; it reads KMSKS. K537 is a binding site for ATP. The stretch at 847 to 876 forms a coiled coil; that stretch reads PEKVVAIEKAKKADAEAKIEALKASLKSLS.

This sequence belongs to the class-I aminoacyl-tRNA synthetase family. ValS type 1 subfamily. Monomer.

It localises to the cytoplasm. It carries out the reaction tRNA(Val) + L-valine + ATP = L-valyl-tRNA(Val) + AMP + diphosphate. In terms of biological role, catalyzes the attachment of valine to tRNA(Val). As ValRS can inadvertently accommodate and process structurally similar amino acids such as threonine, to avoid such errors, it has a 'posttransfer' editing activity that hydrolyzes mischarged Thr-tRNA(Val) in a tRNA-dependent manner. In Christiangramia forsetii (strain DSM 17595 / CGMCC 1.15422 / KT0803) (Gramella forsetii), this protein is Valine--tRNA ligase.